Consider the following 467-residue polypeptide: Solute carrier family 52, riboflavin transporter, member 3 (467 aa).

At 1–2 the chain is on the cytoplasmic side; it reads MA. Residues 3–23 form a helical membrane-spanning segment; that stretch reads FLIHLLVCTFGMGSWVAINGL. The Extracellular segment spans residues 24 to 43; the sequence is WVELPLLVTELPEGWYLPSY. Residues 44 to 64 traverse the membrane as a helical segment; that stretch reads LTVIIQLANVGPLLVTLLHHF. Over 65–71 the chain is Cytoplasmic; it reads RPGCLSE. Residues 72–92 traverse the membrane as a helical segment; sequence VAVVFTVLGVGTIACTLFAFL. At 93-105 the chain is on the extracellular side; the sequence is WNVTSWVLGSRHS. An N-linked (GlcNAc...) asparagine glycan is attached at N94. The helical transmembrane segment at 106-126 threads the bilayer; the sequence is IAFLVLTFFLALVDCTSSVTF. The Cytoplasmic segment spans residues 127-137; that stretch reads LPFMSRLPTYY. A helical transmembrane segment spans residues 138-158; it reads LTTFFVGEGLSGLLPALVALA. Residues 159–220 are Extracellular-facing; it reads QGSGLTTCVN…SRYLPANFSP (62 aa). N-linked (GlcNAc...) asparagine glycosylation occurs at N168. The helical transmembrane segment at 221–241 threads the bilayer; that stretch reads LVFFLLLSFMMACCFISFFFL. Topologically, residues 242–294 are cytoplasmic; sequence QRQPKRWEASIEDLLTSQVTLNSIRPQEGKDLGPPEESGKAQDPPEEKTAPQH. A Phosphoserine modification is found at S251. The segment at 266 to 288 is disordered; that stretch reads RPQEGKDLGPPEESGKAQDPPEE. The span at 268–288 shows a compositional bias: basic and acidic residues; that stretch reads QEGKDLGPPEESGKAQDPPEE. The chain crosses the membrane as a helical span at residues 295–315; that stretch reads LAHLTFIYVLVAFVNALTNGV. Residues 316 to 333 are Extracellular-facing; it reads LPSVQTYSCLSYGPVAYH. A helical transmembrane segment spans residues 334–354; the sequence is LSATLSSMASPLTCFLSIFLP. The Cytoplasmic segment spans residues 355–359; that stretch reads NRSLP. A helical transmembrane segment spans residues 360-380; it reads FLGVLAVLGTSFGAYNMAMAV. The Extracellular segment spans residues 381 to 394; the sequence is MSPCPFMQGHWGGE. Residues 395–415 traverse the membrane as a helical segment; sequence VLIVVSWVLFTGCLSYVKVML. Residues 416–425 lie on the Cytoplasmic side of the membrane; that stretch reads GVILRDHSRS. A helical membrane pass occupies residues 426-446; the sequence is ALLWCGAAVQLGSLLGAVVMF. At 447–467 the chain is on the extracellular side; the sequence is PLVNVLRLFSSADFCSLQCSA.

It belongs to the riboflavin transporter family.

It is found in the cell membrane. It catalyses the reaction riboflavin(in) = riboflavin(out). Functionally, plasma membrane transporter mediating the uptake by cells of the water soluble vitamin B2/riboflavin that plays a key role in biochemical oxidation-reduction reactions of the carbohydrate, lipid, and amino acid metabolism. This chain is Solute carrier family 52, riboflavin transporter, member 3 (SLC52A3), found in Bos taurus (Bovine).